Here is a 158-residue protein sequence, read N- to C-terminus: Small ribosomal subunit protein uS17 (158 aa).

A2 carries the post-translational modification N-acetylalanine. R22 bears the Citrulline mark. 3 positions are modified to N6-acetyllysine: K38, K45, and K58. A lipid anchor (S-palmitoyl cysteine) is attached at C60. S67 is subject to Phosphoserine. R69 bears the Omega-N-methylarginine mark. Position 110 is a phosphoserine (S110).

It belongs to the universal ribosomal protein uS17 family. As to quaternary structure, component of the small ribosomal subunit. Part of the small subunit (SSU) processome, composed of more than 70 proteins and the RNA chaperone small nucleolar RNA (snoRNA) U3. In terms of processing, citrullinated by PADI4.

The protein resides in the cytoplasm. Its subcellular location is the nucleus. It is found in the nucleolus. Its function is as follows. Component of the small ribosomal subunit. The ribosome is a large ribonucleoprotein complex responsible for the synthesis of proteins in the cell. Part of the small subunit (SSU) processome, first precursor of the small eukaryotic ribosomal subunit. During the assembly of the SSU processome in the nucleolus, many ribosome biogenesis factors, an RNA chaperone and ribosomal proteins associate with the nascent pre-rRNA and work in concert to generate RNA folding, modifications, rearrangements and cleavage as well as targeted degradation of pre-ribosomal RNA by the RNA exosome. This chain is Small ribosomal subunit protein uS17 (RPS11), found in Canis lupus familiaris (Dog).